The chain runs to 208 residues: Uridine kinase (208 aa).

11–18 (GGSGSGKT) is a binding site for ATP.

The protein belongs to the uridine kinase family.

The protein resides in the cytoplasm. It catalyses the reaction uridine + ATP = UMP + ADP + H(+). The catalysed reaction is cytidine + ATP = CMP + ADP + H(+). Its pathway is pyrimidine metabolism; CTP biosynthesis via salvage pathway; CTP from cytidine: step 1/3. The protein operates within pyrimidine metabolism; UMP biosynthesis via salvage pathway; UMP from uridine: step 1/1. The polypeptide is Uridine kinase (Staphylococcus carnosus (strain TM300)).